We begin with the raw amino-acid sequence, 674 residues long: Inorganic pyrophosphatase TTM2 (674 aa).

The CYTH domain occupies 248 to 410 (SPTYILKSRK…PRTYIEQIQL (163 aa)). 2 disordered regions span residues 457–498 (KNLK…SPAN) and 619–640 (RSRL…SKSS). A compositionally biased stretch (basic and acidic residues) spans 484 to 496 (SDRRYEERNHDSP). The segment covering 623–640 (ARTGSSNSGNRGRSSKSS) has biased composition (low complexity). A helical membrane pass occupies residues 650 to 670 (LPLVLTVAICSIGIIVIKSYI).

Mg(2+) serves as cofactor. As to expression, predominantly expressed in the shoot apices of inflorescences.

The protein resides in the mitochondrion outer membrane. It carries out the reaction diphosphate + H2O = 2 phosphate + H(+). Its function is as follows. Exhibits pyrophosphatase activity with stronger affinity for pyrophosphate (PPi), moderate affinity for ATP and ADP, and weak affinity for tripolyphosphate (PPPi). No activity observed toward uridine substrate. Negative regulator of the salicylic acid (SA)-mediated amplification of defense responses against both virulent and avirulent pathogens, including oomycetes (e.g. H.arabidopsidis) and bacteria (e.g. P.syringae). Represses systemic acquired resistance (SAR). This Arabidopsis thaliana (Mouse-ear cress) protein is Inorganic pyrophosphatase TTM2.